We begin with the raw amino-acid sequence, 475 residues long: MSKEIKAQVVVLGAGPAGYSAAFRCADLGLDTVIIERYNTLGGVCLNVGCIPSKALLHVAKVIEEAKALTEHGIVFGEPKTDIDKVRLWKEKVINQLTGGLAGMAKMRKVNVVNGYGKFTGPNTIEVDGEEGKTVVTFDNAIVAAGSRPIKLPFIPHEDPRIWDSTDALELKEVPGKLLIMGGGIIGLEMATVYHSLGSKIDVVEMFDQLIPAADKDMVKVYTKRIKDKFNLMLETKVTAVEAKEDGIYVSMEGKSAPAQAERYDAVLVAIGRVPNGKLLDAEKAGLEVDERGFIRVDKQMRTNVPHIFAIGDIVGQPMLAHKGVHEGHVAAEVISGKKHYFDPKVIPSIAYTEPEVAWVGKTEKEAKAEGINYEVATFPWAASGRAIASDCADGMTKLIFDKETHRVIGGAIVGTNGGELLGEIGLAIEMGCDAEDIALTIHAHPTLHESVGLAAEVFEGTITDLPNAKAKKKK.

Residues 36–45 (ERYNTLGGVC), Lys-54, and Gly-117 each bind FAD. The cysteines at positions 45 and 50 are disulfide-linked. NAD(+) contacts are provided by residues 182–186 (GGGII), Glu-205, Val-238, and 270–273 (AIGR). FAD-binding residues include Asp-313 and Ala-321. The active-site Proton acceptor is His-445.

Belongs to the class-I pyridine nucleotide-disulfide oxidoreductase family. The cofactor is FAD.

Its subcellular location is the cytoplasm. It carries out the reaction N(6)-[(R)-dihydrolipoyl]-L-lysyl-[protein] + NAD(+) = N(6)-[(R)-lipoyl]-L-lysyl-[protein] + NADH + H(+). In terms of biological role, the branched-chain alpha-keto dehydrogenase complex catalyzes the overall conversion of alpha-keto acids to acyl-CoA and CO(2). It contains multiple copies of 3 enzymatic components: branched-chain alpha-keto acid decarboxylase (E1), lipoamide acyltransferase (E2) and lipoamide dehydrogenase (E3). The polypeptide is Dihydrolipoyl dehydrogenase (lpd) (Vibrio cholerae serotype O1 (strain ATCC 39315 / El Tor Inaba N16961)).